A 40-amino-acid chain; its full sequence is Photosystem II reaction center protein J (40 aa).

Residues 8-28 (IPLWLIGTLTGILVIGLIGIF) traverse the membrane as a helical segment.

It belongs to the PsbJ family. PSII is composed of 1 copy each of membrane proteins PsbA, PsbB, PsbC, PsbD, PsbE, PsbF, PsbH, PsbI, PsbJ, PsbK, PsbL, PsbM, PsbT, PsbX, PsbY, PsbZ, Psb30/Ycf12, at least 3 peripheral proteins of the oxygen-evolving complex and a large number of cofactors. It forms dimeric complexes.

The protein resides in the plastid. It is found in the chloroplast thylakoid membrane. In terms of biological role, one of the components of the core complex of photosystem II (PSII). PSII is a light-driven water:plastoquinone oxidoreductase that uses light energy to abstract electrons from H(2)O, generating O(2) and a proton gradient subsequently used for ATP formation. It consists of a core antenna complex that captures photons, and an electron transfer chain that converts photonic excitation into a charge separation. This chain is Photosystem II reaction center protein J, found in Phalaenopsis aphrodite subsp. formosana (Moth orchid).